The chain runs to 503 residues: Probable cytosol aminopeptidase (503 aa).

2 residues coordinate Mn(2+): K274 and D279. K286 is an active-site residue. Positions 297, 356, and 358 each coordinate Mn(2+). The active site involves R360.

It belongs to the peptidase M17 family. Requires Mn(2+) as cofactor.

It localises to the cytoplasm. The catalysed reaction is Release of an N-terminal amino acid, Xaa-|-Yaa-, in which Xaa is preferably Leu, but may be other amino acids including Pro although not Arg or Lys, and Yaa may be Pro. Amino acid amides and methyl esters are also readily hydrolyzed, but rates on arylamides are exceedingly low.. It carries out the reaction Release of an N-terminal amino acid, preferentially leucine, but not glutamic or aspartic acids.. Its function is as follows. Presumably involved in the processing and regular turnover of intracellular proteins. Catalyzes the removal of unsubstituted N-terminal amino acids from various peptides. The sequence is that of Probable cytosol aminopeptidase from Burkholderia mallei (strain SAVP1).